Here is a 104-residue protein sequence, read N- to C-terminus: Iron-sulfur cluster assembly protein CyaY (104 aa).

It belongs to the frataxin family.

Its function is as follows. Involved in iron-sulfur (Fe-S) cluster assembly. May act as a regulator of Fe-S biogenesis. This chain is Iron-sulfur cluster assembly protein CyaY, found in Vibrio atlanticus (strain LGP32) (Vibrio splendidus (strain Mel32)).